Here is a 204-residue protein sequence, read N- to C-terminus: NADH-quinone oxidoreductase subunit C (204 aa).

The protein belongs to the complex I 30 kDa subunit family. As to quaternary structure, NDH-1 is composed of 14 different subunits. Subunits NuoB, C, D, E, F, and G constitute the peripheral sector of the complex.

It is found in the cell inner membrane. It catalyses the reaction a quinone + NADH + 5 H(+)(in) = a quinol + NAD(+) + 4 H(+)(out). Functionally, NDH-1 shuttles electrons from NADH, via FMN and iron-sulfur (Fe-S) centers, to quinones in the respiratory chain. The immediate electron acceptor for the enzyme in this species is believed to be ubiquinone. Couples the redox reaction to proton translocation (for every two electrons transferred, four hydrogen ions are translocated across the cytoplasmic membrane), and thus conserves the redox energy in a proton gradient. In Vesicomyosocius okutanii subsp. Calyptogena okutanii (strain HA), this protein is NADH-quinone oxidoreductase subunit C.